Reading from the N-terminus, the 640-residue chain is Probable potassium transport system protein Kup 1 (640 aa).

The next 12 membrane-spanning stretches (helical) occupy residues 25–45, 65–85, 115–135, 153–173, 181–201, 227–247, 263–283, 305–325, 353–373, 381–401, 410–430, and 438–458; these read LVLAALGVVYGDLGTSPLYAL, VVSLFLWSLILMVSVKYVMVL, AVGWVLLGLAGAAMLYGDGVI, PALAAYVVPATVVILAMLFMI, VGAAFGPILAAWFVAIAALGL, GFAGFVSLGAVVLCLTGAEAL, WYGLALPALILSYLGQGALLL, MVALSTLATIVASQALITAVF, IYLPLLNWTLMLATIAVVLGF, AAFGLAVSTTMAITTVLFAVL, WWAVALVAGSLFAIDLAFWLA, and GGWLPLLLGLAVFCVMGCWFG.

The protein belongs to the HAK/KUP transporter (TC 2.A.72) family.

It is found in the cell inner membrane. It carries out the reaction K(+)(in) + H(+)(in) = K(+)(out) + H(+)(out). Its function is as follows. Transport of potassium into the cell. Likely operates as a K(+):H(+) symporter. This Chromobacterium violaceum (strain ATCC 12472 / DSM 30191 / JCM 1249 / CCUG 213 / NBRC 12614 / NCIMB 9131 / NCTC 9757 / MK) protein is Probable potassium transport system protein Kup 1.